The primary structure comprises 388 residues: Chorismate synthase (388 aa).

Residues arginine 39 and arginine 45 each contribute to the NADP(+) site. FMN contacts are provided by residues 130–132 (RSS), 251–252 (NA), glycine 296, 311–315 (KPIPT), and arginine 337.

This sequence belongs to the chorismate synthase family. As to quaternary structure, homotetramer. It depends on FMNH2 as a cofactor.

The enzyme catalyses 5-O-(1-carboxyvinyl)-3-phosphoshikimate = chorismate + phosphate. Its pathway is metabolic intermediate biosynthesis; chorismate biosynthesis; chorismate from D-erythrose 4-phosphate and phosphoenolpyruvate: step 7/7. Functionally, catalyzes the anti-1,4-elimination of the C-3 phosphate and the C-6 proR hydrogen from 5-enolpyruvylshikimate-3-phosphate (EPSP) to yield chorismate, which is the branch point compound that serves as the starting substrate for the three terminal pathways of aromatic amino acid biosynthesis. This reaction introduces a second double bond into the aromatic ring system. The polypeptide is Chorismate synthase (Streptococcus pyogenes serotype M28 (strain MGAS6180)).